A 203-amino-acid chain; its full sequence is Ran-specific GTPase-activating protein (203 aa).

Over residues 1 to 26 (MAAAKDSHEDHDTSTENADESNHDPQ) the composition is skewed to basic and acidic residues. The tract at residues 1–33 (MAAAKDSHEDHDTSTENADESNHDPQFEPIVSL) is disordered. Ala2 carries the post-translational modification N-acetylalanine. Thr13 is subject to Phosphothreonine. Phosphoserine is present on residues Ser21 and Ser60. The RanBD1 domain maps to 26-164 (QFEPIVSLPE…FEECRKEIEE (139 aa)). The residue at position 150 (Lys150) is an N6-acetyllysine; alternate. The residue at position 150 (Lys150) is an N6-succinyllysine; alternate. Residues 163 to 192 (EEREKKGPGKNDNAEKVAEKLEALSVREAR) are compositionally biased toward basic and acidic residues. The segment at 163-203 (EEREKKGPGKNDNAEKVAEKLEALSVREAREEAEEKSEEKQ) is disordered. At Lys182 the chain carries N6-acetyllysine. Ser187 carries the phosphoserine modification. Positions 193–203 (EEAEEKSEEKQ) are enriched in acidic residues.

The protein belongs to the RANBP1 family. In terms of assembly, interacts with RAN (via C-terminus of GTP-bound form) but not with GDP-bound RAN. Identified in a complex composed of RAN, RANGAP1 and RANBP1. Identified in a complex that contains TNPO1, RAN and RANBP1. Identified in a complex that contains CSE1L, KPNA2, RAN and RANBP1. Identified in a complex with nucleotide-free RAN and RCC1.

Its function is as follows. Plays a role in RAN-dependent nucleocytoplasmic transport. Alleviates the TNPO1-dependent inhibition of RAN GTPase activity and mediates the dissociation of RAN from proteins involved in transport into the nucleus. Induces a conformation change in the complex formed by XPO1 and RAN that triggers the release of the nuclear export signal of cargo proteins. Promotes the disassembly of the complex formed by RAN and importin beta. Promotes dissociation of RAN from a complex with KPNA2 and CSE1L. Required for normal mitotic spindle assembly and normal progress through mitosis via its effect on RAN. Does not increase the RAN GTPase activity by itself, but increases GTP hydrolysis mediated by RANGAP1. Inhibits RCC1-dependent exchange of RAN-bound GDP by GTP. The polypeptide is Ran-specific GTPase-activating protein (Ranbp1) (Mus musculus (Mouse)).